A 466-amino-acid chain; its full sequence is Asparagine--tRNA ligase (466 aa).

This sequence belongs to the class-II aminoacyl-tRNA synthetase family. Homodimer.

The protein localises to the cytoplasm. The enzyme catalyses tRNA(Asn) + L-asparagine + ATP = L-asparaginyl-tRNA(Asn) + AMP + diphosphate + H(+). This Escherichia coli O139:H28 (strain E24377A / ETEC) protein is Asparagine--tRNA ligase.